Here is a 576-residue protein sequence, read N- to C-terminus: Beta-bisabolene synthase (576 aa).

(2E,6E)-farnesyl diphosphate is bound by residues Arg286, Asp323, Asp327, Arg466, and Asn469. Mg(2+) is bound by residues Asp323 and Asp327. Residues 323-327 (DDVYD) carry the DDXXD motif motif. Asn469, Thr473, and Glu477 together coordinate Mg(2+).

The protein belongs to the terpene synthase family. Tpsb subfamily. Mg(2+) is required as a cofactor. It depends on Mn(2+) as a cofactor.

Functionally, produces almost exclusively beta-bisabolene and only traces of alpha-bisabolol from (2E,6E)-farnesyl diphosphate in fragrance biosynthesis. This Santalum austrocaledonicum (Sandalwood) protein is Beta-bisabolene synthase.